The chain runs to 160 residues: RNA pyrophosphohydrolase (160 aa).

Residues 10–154 (PYRKCVGVVL…KRDVYEQVFD (145 aa)) enclose the Nudix hydrolase domain. A Nudix box motif is present at residues 44–65 (GGIEDGEDARTAALRELVEETG).

It belongs to the Nudix hydrolase family. RppH subfamily. A divalent metal cation serves as cofactor.

In terms of biological role, accelerates the degradation of transcripts by removing pyrophosphate from the 5'-end of triphosphorylated RNA, leading to a more labile monophosphorylated state that can stimulate subsequent ribonuclease cleavage. In Dinoroseobacter shibae (strain DSM 16493 / NCIMB 14021 / DFL 12), this protein is RNA pyrophosphohydrolase.